Here is a 138-residue protein sequence, read N- to C-terminus: ATP synthase subunit g, mitochondrial (138 aa).

It belongs to the ATPase g subunit family. In terms of assembly, F-type ATP synthases have 2 components, the catalytic core F(1) and the membrane-embedded component F(0), linked together by a central stalk and a peripheral stalk. The central stalk, also called rotor shaft, is often seen as part of F(1). The peripheral stalk is seen as part of F(0). F(0) contains the membrane channel next to the rotor. F-type ATP synthases form dimers but each monomer functions independently in ATP generation. The dimer consists of 17 different polypeptides: ATP1 (subunit alpha, 3 molecules per monomer, part of F(1)), ATP2 (subunit beta, 3 copies per monomer, part of F(1)), ATP3 (subunit gamma, part of the central stalk), ATP4 (subunit b, part of the peripheral stalk), ATP5/OSCP (subunit 5/OSCP, part of the peripheral stalk), ATP6 (subunit a, part of the peripheral stalk), ATP7 (subunit d, part of the peripheral stalk), ATP8 (subunit 8, part of the peripheral stalk), OLI1 (subunit c, part of the rotor, 10 molecules per monomer), ATP14 (subunit h, part of the peripheral stalk), ATP15 (subunit epsilon, part of the central stalk), ATP16 (subunit delta, part of the central stalk), ATP17 (subunit f, part of the peripheral stalk), ATP18 (subunit i/j, part of the peripheral stalk), ATP19 (subunit k, dimer-specific, at interface between monomers), ATP20 (subunit g, at interface between monomers), TIM11 (subunit e, at interface between monomers).

The protein localises to the mitochondrion inner membrane. Mitochondrial membrane ATP synthase (F(1)F(0) ATP synthase or Complex V) produces ATP from ADP in the presence of a proton gradient across the membrane which is generated by electron transport complexes of the respiratory chain. F-type ATP synthases consist of two structural domains, F(1) - containing the extramembraneous catalytic core, and F(0) - containing the membrane proton channel, linked together by a central stalk and a peripheral stalk. During catalysis, ATP synthesis in the catalytic domain of F(1) is coupled via a rotary mechanism of the central stalk subunits to proton translocation. Part of the complex F(0) domain. Minor subunit located with subunit a/ATP6 in the membrane. Together with subunit e/TIM11, probably contributes to membrane curvature at the site of the ATP synthase dimer, ultimately contributing to formation of cristae. The polypeptide is ATP synthase subunit g, mitochondrial (Yarrowia lipolytica (strain CLIB 122 / E 150) (Yeast)).